A 470-amino-acid polypeptide reads, in one-letter code: tRNA-2-methylthio-N(6)-dimethylallyladenosine synthase (470 aa).

The region spanning 20-138 (PRVHIETFGC…LPELVERARS (119 aa)) is the MTTase N-terminal domain. Residues Cys-29, Cys-65, Cys-99, Cys-176, Cys-180, and Cys-183 each coordinate [4Fe-4S] cluster. The region spanning 162–398 (REGDLKAWVT…MEVQNRIARA (237 aa)) is the Radical SAM core domain. The 64-residue stretch at 401-464 (EARVGKVYDI…TWTLEGELVE (64 aa)) folds into the TRAM domain.

Belongs to the methylthiotransferase family. MiaB subfamily. Monomer. The cofactor is [4Fe-4S] cluster.

The protein resides in the cytoplasm. It carries out the reaction N(6)-dimethylallyladenosine(37) in tRNA + (sulfur carrier)-SH + AH2 + 2 S-adenosyl-L-methionine = 2-methylsulfanyl-N(6)-dimethylallyladenosine(37) in tRNA + (sulfur carrier)-H + 5'-deoxyadenosine + L-methionine + A + S-adenosyl-L-homocysteine + 2 H(+). Functionally, catalyzes the methylthiolation of N6-(dimethylallyl)adenosine (i(6)A), leading to the formation of 2-methylthio-N6-(dimethylallyl)adenosine (ms(2)i(6)A) at position 37 in tRNAs that read codons beginning with uridine. The polypeptide is tRNA-2-methylthio-N(6)-dimethylallyladenosine synthase (Symbiobacterium thermophilum (strain DSM 24528 / JCM 14929 / IAM 14863 / T)).